A 449-amino-acid chain; its full sequence is Ribulose bisphosphate carboxylase large chain (449 aa).

N6,N6,N6-trimethyllysine is present on lysine 7. Substrate-binding residues include asparagine 116 and threonine 166. The active-site Proton acceptor is lysine 168. Substrate is bound at residue lysine 170. Mg(2+) contacts are provided by lysine 194, aspartate 196, and glutamate 197. An N6-carboxylysine modification is found at lysine 194. Histidine 287 functions as the Proton acceptor in the catalytic mechanism. Substrate-binding residues include arginine 288, histidine 320, and serine 372.

Belongs to the RuBisCO large chain family. Type I subfamily. Heterohexadecamer of 8 large chains and 8 small chains; disulfide-linked. The disulfide link is formed within the large subunit homodimers. It depends on Mg(2+) as a cofactor. Post-translationally, the disulfide bond which can form in the large chain dimeric partners within the hexadecamer appears to be associated with oxidative stress and protein turnover.

The protein resides in the plastid. Its subcellular location is the chloroplast. It catalyses the reaction 2 (2R)-3-phosphoglycerate + 2 H(+) = D-ribulose 1,5-bisphosphate + CO2 + H2O. It carries out the reaction D-ribulose 1,5-bisphosphate + O2 = 2-phosphoglycolate + (2R)-3-phosphoglycerate + 2 H(+). In terms of biological role, ruBisCO catalyzes two reactions: the carboxylation of D-ribulose 1,5-bisphosphate, the primary event in carbon dioxide fixation, as well as the oxidative fragmentation of the pentose substrate in the photorespiration process. Both reactions occur simultaneously and in competition at the same active site. The chain is Ribulose bisphosphate carboxylase large chain from Aspidistra elatior (Cast-iron plant).